Consider the following 277-residue polypeptide: Large ribosomal subunit protein uL2 (277 aa).

Disordered regions lie at residues 28-55 (EPEKSLTHHKHSKQGRNNRGVVTSRHRG) and 207-277 (KAGR…RTQG). Basic residues-rich tracts occupy residues 34–43 (THHKHSKQGR), 209–220 (GRTRHRGQRPHV), and 255–265 (LGRKTRNKKKR).

It belongs to the universal ribosomal protein uL2 family. Part of the 50S ribosomal subunit. Forms a bridge to the 30S subunit in the 70S ribosome.

In terms of biological role, one of the primary rRNA binding proteins. Required for association of the 30S and 50S subunits to form the 70S ribosome, for tRNA binding and peptide bond formation. It has been suggested to have peptidyltransferase activity; this is somewhat controversial. Makes several contacts with the 16S rRNA in the 70S ribosome. In Microcystis aeruginosa (strain NIES-843 / IAM M-2473), this protein is Large ribosomal subunit protein uL2.